The following is a 174-amino-acid chain: Type II restriction enzyme Bsp6I (174 aa).

The catalysed reaction is Endonucleolytic cleavage of DNA to give specific double-stranded fragments with terminal 5'-phosphates.. Functionally, a P subtype restriction enzyme that recognizes the double-stranded sequence 5'-GCNGC-3' and cleaves after C-2. The protein is Type II restriction enzyme Bsp6I of Bacillus sp. (strain RFL6).